Here is a 352-residue protein sequence, read N- to C-terminus: Protein RecA (352 aa).

67–74 (GPESSGKT) provides a ligand contact to ATP. The disordered stretch occupies residues 332–352 (VKPADAESKEDSPKLKAVDGF). Basic and acidic residues predominate over residues 335–352 (ADAESKEDSPKLKAVDGF).

It belongs to the RecA family.

It is found in the cytoplasm. Its function is as follows. Can catalyze the hydrolysis of ATP in the presence of single-stranded DNA, the ATP-dependent uptake of single-stranded DNA by duplex DNA, and the ATP-dependent hybridization of homologous single-stranded DNAs. It interacts with LexA causing its activation and leading to its autocatalytic cleavage. This Pseudarthrobacter chlorophenolicus (strain ATCC 700700 / DSM 12829 / CIP 107037 / JCM 12360 / KCTC 9906 / NCIMB 13794 / A6) (Arthrobacter chlorophenolicus) protein is Protein RecA.